Here is a 265-residue protein sequence, read N- to C-terminus: MRILVTNDDGIDALGIKRLVEALLTLEGAEVSIVAPVEEKSGVGHGITYRSALSPEQRDFYGMPVKAWAVNGNPADCVKAAYHLLFEHGKKPDIVFSGINVGTNLGRDIYYSGTCSGAREAVILGVPGVALSYDNWFDQDNYGDVVEMIRPLVKEFSDRAIKGELASEVFWNINIPHVPLAEVKGMVPATLSMNHYEDKYSEEAEGYYLAREYPQVMPLAEPLDYDLLKHGYIAITPVHIDATDRTLLKQMDNWALLKAWGKQEE.

Asp-8, Asp-9, Ser-41, and Asn-100 together coordinate a divalent metal cation.

Belongs to the SurE nucleotidase family. The cofactor is a divalent metal cation.

The protein resides in the cytoplasm. The catalysed reaction is a ribonucleoside 5'-phosphate + H2O = a ribonucleoside + phosphate. In terms of biological role, nucleotidase that shows phosphatase activity on nucleoside 5'-monophosphates. This is 5'-nucleotidase SurE from Brevibacillus brevis (strain 47 / JCM 6285 / NBRC 100599).